The following is an 809-amino-acid chain: Glutamine--tRNA ligase (809 aa).

Over residues 185-198 (DLIKKKTKNNEKKK) the composition is skewed to basic and acidic residues. Residues 185-216 (DLIKKKTKNNEKKKTNSAKKSSDNSASSGPKR) are disordered. The 'HIGH' region signature appears at 258–268 (PEPNGYLHIGH). ATP is bound by residues 259–261 (EPN) and 265–271 (HIGHSKA). D291 lines the L-glutamine pocket. The residue at position 378 (S378) is a Phosphoserine. Y440 is a binding site for L-glutamine. Residues T459, 488–489 (RL), and 496–498 (LSK) each bind ATP. Residues 495–499 (VLSKR) carry the 'KMSKS' region motif.

It belongs to the class-I aminoacyl-tRNA synthetase family.

The catalysed reaction is tRNA(Gln) + L-glutamine + ATP = L-glutaminyl-tRNA(Gln) + AMP + diphosphate. The chain is Glutamine--tRNA ligase (GLN4) from Saccharomyces cerevisiae (strain ATCC 204508 / S288c) (Baker's yeast).